The following is a 228-amino-acid chain: Translin (228 aa).

The segment at 86-90 (RFHEH) is DNA/RNA binding. The segment at 177 to 198 (LDSGFRLLNLKNDSLRKRYDGL) is leucine-zipper. An N6-acetyllysine modification is found at Lys-187. Ser-190 bears the Phosphoserine mark. At Lys-199 the chain carries N6-acetyllysine.

Belongs to the translin family. In terms of assembly, ring-shaped heterooctamer of six TSN and two TSNAX subunits, DNA/RNA binding occurs inside the ring.

Its subcellular location is the cytoplasm. It is found in the nucleus. Functionally, DNA-binding protein that specifically recognizes consensus sequences at the breakpoint junctions in chromosomal translocations, mostly involving immunoglobulin (Ig)/T-cell receptor gene segments. Seems to recognize single-stranded DNA ends generated by staggered breaks occurring at recombination hot spots. In terms of biological role, exhibits both single-stranded and double-stranded endoribonuclease activity. May act as an activator of RNA-induced silencing complex (RISC) by facilitating endonucleolytic cleavage of the siRNA passenger strand. In Homo sapiens (Human), this protein is Translin.